The following is a 233-amino-acid chain: Small ribosomal subunit protein uS3 (233 aa).

Positions 39 to 107 (VREFLKKRLG…PVHVNIEEVR (69 aa)) constitute a KH type-2 domain. Residues 212 to 233 (VQATPAAPEKKMRKGARNAAAN) form a disordered region.

This sequence belongs to the universal ribosomal protein uS3 family. As to quaternary structure, part of the 30S ribosomal subunit. Forms a tight complex with proteins S10 and S14.

In terms of biological role, binds the lower part of the 30S subunit head. Binds mRNA in the 70S ribosome, positioning it for translation. This Chromobacterium violaceum (strain ATCC 12472 / DSM 30191 / JCM 1249 / CCUG 213 / NBRC 12614 / NCIMB 9131 / NCTC 9757 / MK) protein is Small ribosomal subunit protein uS3.